We begin with the raw amino-acid sequence, 610 residues long: Probable indole-3-acetic acid-amido synthetase GH3.1 (610 aa).

This sequence belongs to the IAA-amido conjugating enzyme family. Expressed in flowers.

Functionally, may catalyze the synthesis of indole-3-acetic acid (IAA)-amino acid conjugates, providing a mechanism for the plant to cope with the presence of excess auxin. The sequence is that of Probable indole-3-acetic acid-amido synthetase GH3.1 (GH3.1) from Oryza sativa subsp. japonica (Rice).